A 174-amino-acid chain; its full sequence is Crossover junction endodeoxyribonuclease RuvC (174 aa).

Active-site residues include Asp-8, Glu-68, and Asp-140. 3 residues coordinate Mg(2+): Asp-8, Glu-68, and Asp-140.

The protein belongs to the RuvC family. As to quaternary structure, homodimer which binds Holliday junction (HJ) DNA. The HJ becomes 2-fold symmetrical on binding to RuvC with unstacked arms; it has a different conformation from HJ DNA in complex with RuvA. In the full resolvosome a probable DNA-RuvA(4)-RuvB(12)-RuvC(2) complex forms which resolves the HJ. Mg(2+) is required as a cofactor.

Its subcellular location is the cytoplasm. The catalysed reaction is Endonucleolytic cleavage at a junction such as a reciprocal single-stranded crossover between two homologous DNA duplexes (Holliday junction).. Its function is as follows. The RuvA-RuvB-RuvC complex processes Holliday junction (HJ) DNA during genetic recombination and DNA repair. Endonuclease that resolves HJ intermediates. Cleaves cruciform DNA by making single-stranded nicks across the HJ at symmetrical positions within the homologous arms, yielding a 5'-phosphate and a 3'-hydroxyl group; requires a central core of homology in the junction. The consensus cleavage sequence is 5'-(A/T)TT(C/G)-3'. Cleavage occurs on the 3'-side of the TT dinucleotide at the point of strand exchange. HJ branch migration catalyzed by RuvA-RuvB allows RuvC to scan DNA until it finds its consensus sequence, where it cleaves and resolves the cruciform DNA. In Legionella pneumophila (strain Corby), this protein is Crossover junction endodeoxyribonuclease RuvC.